Reading from the N-terminus, the 363-residue chain is GTPase Obg (363 aa).

The 159-residue stretch at 1–159 (MKFVDEAFID…KSLKLELKVL (159 aa)) folds into the Obg domain. An OBG-type G domain is found at 160-341 (ADVGLLGRPN…LVHAIFGHVQ (182 aa)). GTP-binding positions include 166–173 (GRPNAGKS), 191–195 (FTTLH), 213–216 (DIPG), 291–294 (NKLD), and 322–324 (SAL). Positions 173 and 193 each coordinate Mg(2+). Positions 343–363 (GQRMDNEPPPLDPRFASAGPA) are disordered.

Belongs to the TRAFAC class OBG-HflX-like GTPase superfamily. OBG GTPase family. In terms of assembly, monomer. The cofactor is Mg(2+).

The protein resides in the cytoplasm. Its function is as follows. An essential GTPase which binds GTP, GDP and possibly (p)ppGpp with moderate affinity, with high nucleotide exchange rates and a fairly low GTP hydrolysis rate. Plays a role in control of the cell cycle, stress response, ribosome biogenesis and in those bacteria that undergo differentiation, in morphogenesis control. The chain is GTPase Obg from Verminephrobacter eiseniae (strain EF01-2).